The sequence spans 603 residues: Iron-sulfur clusters transporter ATM1, mitochondrial (603 aa).

The helical transmembrane segment at 20-41 (VLLAVGLLVGGKVLNVQVPFFF) threads the bilayer. Residues 20–310 (VLLAVGLLVG…LGSVYRELRQ (291 aa)) form the ABC transmembrane type-1 domain. The Mitochondrial intermembrane portion of the chain corresponds to 42–64 (REIVDSLNVDIAATGGTVATVAG). A helical membrane pass occupies residues 65–88 (TMIFAYGASRIGAVVSQELRNAVF). Residues 89–137 (SSVAQKAIRRVATRTFGHLLNLDLNFHLSKQTGGLTRAIDRGTKGISFL) lie on the Mitochondrial matrix side of the membrane. Residues 138-161 (LTSMVFHIVPTALEISMVCGILTY) form a helical membrane-spanning segment. Position 162 (Gln-162) is a topological domain, mitochondrial intermembrane. A helical membrane pass occupies residues 163 to 183 (FGWEFAAVTALTMSAYTAFTI). The Mitochondrial matrix portion of the chain corresponds to 184-249 (WTTAWRTKFR…SSIKVATSLA (66 aa)). Glutathione is bound by residues 189-193 (RTKFR) and 252-255 (NSGQ). The chain crosses the membrane as a helical span at residues 250–268 (FLNSGQNIIFSSALTIMMW). The Mitochondrial intermembrane segment spans residues 269 to 283 (LGAKGIVAGSLSVGD). A helical membrane pass occupies residues 284–305 (LVLINQLVFQLSVPLNFLGSVY). A glutathione-binding site is contributed by Gly-302. The Mitochondrial matrix portion of the chain corresponds to 306–603 (RELRQSLLDM…SEREAPVPVK (298 aa)). The region spanning 345 to 581 (IRFDNVSFGY…NGLYTELWMA (237 aa)) is the ABC transporter domain. ATP contacts are provided by residues Tyr-354 and 378 to 389 (GPSGCGKSTLLR).

This sequence belongs to the ABC transporter superfamily. ABCB family. Heavy Metal importer (TC 3.A.1.210) subfamily. As to quaternary structure, homodimer.

It is found in the mitochondrion inner membrane. Performs an essential function in the generation of cytoplasmic iron-sulfur proteins by mediating the ATP-dependent export of Fe/S cluster precursors synthesized by NFS1 and other mitochondrial proteins. Hydrolyzes ATP. Binds glutathione and may function by transporting a glutathione-conjugated iron-sulfur compound. In Chaetomium globosum (strain ATCC 6205 / CBS 148.51 / DSM 1962 / NBRC 6347 / NRRL 1970) (Soil fungus), this protein is Iron-sulfur clusters transporter ATM1, mitochondrial.